A 510-amino-acid chain; its full sequence is NAD(P)H-quinone oxidoreductase subunit 2 A, chloroplastic (510 aa).

13 consecutive transmembrane segments (helical) span residues 24–44 (LLLFHGSFIFPECILIFGLIL), 57–77 (IPWLYFISSTSLVMSITALLF), 99–119 (IFQFLILLCSTLCIPLSVEYI), 124–144 (MAITEFLLFVLTATLGGMFLC), 149–169 (LITIFVAPECFSLCSYLLSGY), 183–203 (YLLMGGASSSILVHGFSWLYG), 229–249 (ISIALIFITVGIGFKLSPAPF), 295–315 (WHLLLEILAILSMILGNLIAI), 323–343 (MLAYSSIGQIGYVIIGIIVGD), 354–374 (YMLFYISMNLGTFACIVLFGL), 395–415 (ALSSALCLLSLGGLPPLAGFF), 418–438 (LYLFWCGWQAGLYFLVSIGLL), and 484–504 (MILCVIASTIPGISMNPIIAI).

The protein belongs to the complex I subunit 2 family. NDH is composed of at least 16 different subunits, 5 of which are encoded in the nucleus.

The protein localises to the plastid. It is found in the chloroplast thylakoid membrane. The catalysed reaction is a plastoquinone + NADH + (n+1) H(+)(in) = a plastoquinol + NAD(+) + n H(+)(out). It carries out the reaction a plastoquinone + NADPH + (n+1) H(+)(in) = a plastoquinol + NADP(+) + n H(+)(out). In terms of biological role, NDH shuttles electrons from NAD(P)H:plastoquinone, via FMN and iron-sulfur (Fe-S) centers, to quinones in the photosynthetic chain and possibly in a chloroplast respiratory chain. The immediate electron acceptor for the enzyme in this species is believed to be plastoquinone. Couples the redox reaction to proton translocation, and thus conserves the redox energy in a proton gradient. This is NAD(P)H-quinone oxidoreductase subunit 2 A, chloroplastic from Piper cenocladum (Ant piper).